The following is a 151-amino-acid chain: Sec-independent protein translocase protein TatB (151 aa).

A helical membrane pass occupies residues 1–21 (MFDVSFTELMVIGVIALVVIG). The tract at residues 66 to 151 (MDETARSMQT…DKTPPTGSAT (86 aa)) is disordered. The segment covering 93–103 (AELDDTARDAS) has biased composition (basic and acidic residues). Composition is skewed to low complexity over residues 109-122 (ADAPAEPAPAVASD) and 133-151 (APPAAATPADKTPPTGSAT).

The protein belongs to the TatB family. In terms of assembly, the Tat system comprises two distinct complexes: a TatABC complex, containing multiple copies of TatA, TatB and TatC subunits, and a separate TatA complex, containing only TatA subunits. Substrates initially bind to the TatABC complex, which probably triggers association of the separate TatA complex to form the active translocon.

The protein localises to the cell inner membrane. In terms of biological role, part of the twin-arginine translocation (Tat) system that transports large folded proteins containing a characteristic twin-arginine motif in their signal peptide across membranes. Together with TatC, TatB is part of a receptor directly interacting with Tat signal peptides. TatB may form an oligomeric binding site that transiently accommodates folded Tat precursor proteins before their translocation. The chain is Sec-independent protein translocase protein TatB from Bordetella parapertussis (strain 12822 / ATCC BAA-587 / NCTC 13253).